Consider the following 214-residue polypeptide: DNA-binding protein HupB (214 aa).

The residue at position 3 (K3) is an N6-acetyllysine. Position 3 is an N6-succinyllysine (K3). A phosphothreonine mark is found at T43 and T45. N6-acetyllysine is present on residues K72, K86, and K103. Residues 100–214 (PAVKRGVGAS…KKATARRGRK (115 aa)) form a disordered region. Over residues 102–112 (VKRGVGASAAK) the composition is skewed to low complexity. K113 bears the N6-succinyllysine mark. Positions 113–214 (KVAKKAPAKK…KKATARRGRK (102 aa)) are enriched in basic residues. K116 and K133 each carry N6-acetyllysine. Residue K142 is modified to N6-succinyllysine. N6-acetyllysine is present on residues K146 and K167.

The protein belongs to the bacterial histone-like protein family. Long actinobacterial subfamily. Oligomerizes. Homodimer; the crystallized protein is missing the C-terminal 105 residues. Interacts with topoisomerase 1 (topA). Interacts with Eis. Interacts with NAD-dependent protein deacylase NPD (MRA_1161). Interacts with MRA_0812 CoA transferase. Phosphorylated in vivo on Ser and Thr-residues; the protein is degraded during purification so most sites were not identified, but at least one of Thr-43 and/or Thr-45 are modified in vivo. In vitro at least PknE, PknF and PknB phosphorylate HupB; PknE is the most active and phosphorylates many sites in vitro including Thr-43 and Thr-45. Post-translationally, acetylated on 8 Lys residues in vivo (probably by Eis). In vitro acetylated by Eis on 28 residues (strains H37Rv and H37Ra), many more than those identified in vivo. Also acetylated by MRA_0812. Deacetylated in vitro by NAD-dependent protein deacylase NPD (MRA_1161). In terms of processing, succinylated in vivo and in vitro by MRA_0812 and by Eis; only 3 residues are found to be succinylated in vivo, while 27 are modifed in vitro by MRA_0812 and 32 are succinylated by Eis. NAD-dependent protein deacylase (MRA_1161) desuccinylates this protein.

It is found in the cytoplasm. The protein resides in the nucleoid. The catalysed reaction is 4 Fe(2+) + O2 + 4 H(+) = 4 Fe(3+) + 2 H2O. With respect to regulation, two trans-stilbene derivatives, 4,4'-[(E)-ethene-1,2 diylbis({5[(phenylcarbonyl)amino]benzene-2,1-diyl}sulfonylimino)] dibenzoic acid and its methoxy derivative 4,4'-[1,2-ethenediylbis({5-[(4-methoxybenzoyl)amino]-2,1phenylene}sulfonylimino)] dibenzoic acid, respectively SD1 and SD4, inhibit DNA binding with 50% inhibition at 20 uM for SD1 and 1.7 uM for SD4. SD1 and SD4 have minimal inhibitory concentrations of 400 and 800 uM on strain H37Ra respectively. Functionally, a nucleoid-associated protein (NAP) that plays a role in local chromosome architecture. Binds DNA non-sequence specifically; in vitro phosphorylation of an N-terminal fragment decreases DNA-binding. Stimulates supercoiling relaxation by topoisomerase 1 (Top1, topA), at higher than 80 uM inhibits relaxation, has no effect on DNA gyrase; the effect is independent of DNA-binding. Increases the intervening strand passage activity of Top1 that occurs between the two catalytic trans-esterification reactions. Does not bind ssDNA, probably helps condense chromosomes. Binds dsDNA; in vitro acetylated protein binds 10-fold less well to DNA (note in vitro acetylated protein is more heavily modified than in vivo modified protein). In vitro acetylated protein compacts DNA less well than unmodified protein. In vitro succinylated DNA bind dsDNA less well than unmodified protein (note in vitro succinylated protein is more heavily modified than in vivo modified protein). Has ferroxidase activity, converts Fe(2+) into Fe(3+). Binds Fe(3+) but not Fe(2+); prevents the generation of hydroxyl radicals by the Fenton reaction and thus protects DNA from damage. May function in iron storage. Its function is as follows. Required for biofilm formation; trimethylation by recombinant human SUV39H1 (a histone methyltransferase) inhibits biofilm formation. Probably influences transcription. RNase E and HupB jointly contribute to cellular adaptation to changing growth conditions and survival during antibiotic treatment and in the host. The polypeptide is DNA-binding protein HupB (Mycobacterium tuberculosis (strain ATCC 25177 / H37Ra)).